The primary structure comprises 180 residues: NAD(P)H-quinone oxidoreductase subunit I, chloroplastic (180 aa).

2 4Fe-4S ferredoxin-type domains span residues 55–84 (GRIH…VDWR) and 95–124 (LNYS…MTEE). Cysteine 64, cysteine 67, cysteine 70, cysteine 74, cysteine 104, cysteine 107, cysteine 110, and cysteine 114 together coordinate [4Fe-4S] cluster.

It belongs to the complex I 23 kDa subunit family. As to quaternary structure, NDH is composed of at least 16 different subunits, 5 of which are encoded in the nucleus. Requires [4Fe-4S] cluster as cofactor.

It is found in the plastid. It localises to the chloroplast thylakoid membrane. It carries out the reaction a plastoquinone + NADH + (n+1) H(+)(in) = a plastoquinol + NAD(+) + n H(+)(out). It catalyses the reaction a plastoquinone + NADPH + (n+1) H(+)(in) = a plastoquinol + NADP(+) + n H(+)(out). Its function is as follows. NDH shuttles electrons from NAD(P)H:plastoquinone, via FMN and iron-sulfur (Fe-S) centers, to quinones in the photosynthetic chain and possibly in a chloroplast respiratory chain. The immediate electron acceptor for the enzyme in this species is believed to be plastoquinone. Couples the redox reaction to proton translocation, and thus conserves the redox energy in a proton gradient. This Chloranthus spicatus (Chulantree) protein is NAD(P)H-quinone oxidoreductase subunit I, chloroplastic.